The sequence spans 244 residues: MTDLVYEQPLNEKIRSYLRLEYLNKQLGNNLNHDHQHRCFYPLFSLCELSERCDYRNEVLKDIERNLLQLGKWQELDHVDSEQIEFYIQSLAQAREQLQRPERCGSQLKQDRFLSALRQRFGMPGACCNFDLPQLHFWLAKPWEERQQDYQAWISHFDPLLTPITLLLQLTRSTAHFDNATAHAGFYQGDSAQALSLVRVKVDAAHGCYPTISGHRNRYAIHFVQFDQQRHSDRSIEFLLATCA.

This sequence belongs to the ZapD family. Interacts with FtsZ.

The protein localises to the cytoplasm. Functionally, cell division factor that enhances FtsZ-ring assembly. Directly interacts with FtsZ and promotes bundling of FtsZ protofilaments, with a reduction in FtsZ GTPase activity. The polypeptide is Cell division protein ZapD (Shewanella sp. (strain MR-7)).